An 89-amino-acid chain; its full sequence is Small ribosomal subunit protein uS14A (89 aa).

The protein belongs to the universal ribosomal protein uS14 family. In terms of assembly, part of the 30S ribosomal subunit. Contacts proteins S3 and S10.

In terms of biological role, binds 16S rRNA, required for the assembly of 30S particles and may also be responsible for determining the conformation of the 16S rRNA at the A site. This chain is Small ribosomal subunit protein uS14A, found in Bacillus licheniformis (strain ATCC 14580 / DSM 13 / JCM 2505 / CCUG 7422 / NBRC 12200 / NCIMB 9375 / NCTC 10341 / NRRL NRS-1264 / Gibson 46).